A 230-amino-acid chain; its full sequence is Somatolactin (230 aa).

Positions 1 to 23 are cleaved as a signal peptide; it reads MKKTTVLQVCMVFVVCSLQAVIG. 3 disulfide bridges follow: Cys-28–Cys-38, Cys-87–Cys-202, and Cys-219–Cys-227. A glycan (N-linked (GlcNAc...) asparagine) is linked at Asn-226.

Belongs to the somatotropin/prolactin family.

It is found in the secreted. This chain is Somatolactin, found in Carassius auratus (Goldfish).